A 383-amino-acid polypeptide reads, in one-letter code: tRNA-specific 2-thiouridylase MnmA (383 aa).

ATP-binding positions include 30–37 (GLSGGVDS) and Leu56. Residue Cys117 is the Nucleophile of the active site. Cys117 and Cys216 are oxidised to a cystine. Gly142 contributes to the ATP binding site. The interval 166–168 (KDQ) is interaction with tRNA. Cys216 functions as the Cysteine persulfide intermediate in the catalytic mechanism. An interaction with tRNA region spans residues 321–322 (RY).

The protein belongs to the MnmA/TRMU family.

The protein localises to the cytoplasm. It catalyses the reaction S-sulfanyl-L-cysteinyl-[protein] + uridine(34) in tRNA + AH2 + ATP = 2-thiouridine(34) in tRNA + L-cysteinyl-[protein] + A + AMP + diphosphate + H(+). Functionally, catalyzes the 2-thiolation of uridine at the wobble position (U34) of tRNA, leading to the formation of s(2)U34. This chain is tRNA-specific 2-thiouridylase MnmA, found in Synechococcus sp. (strain CC9605).